Reading from the N-terminus, the 178-residue chain is Cell division protein ZapC (178 aa).

This sequence belongs to the ZapC family. Interacts directly with FtsZ.

Its subcellular location is the cytoplasm. Its function is as follows. Contributes to the efficiency of the cell division process by stabilizing the polymeric form of the cell division protein FtsZ. Acts by promoting interactions between FtsZ protofilaments and suppressing the GTPase activity of FtsZ. This chain is Cell division protein ZapC, found in Pseudoalteromonas atlantica (strain T6c / ATCC BAA-1087).